The chain runs to 475 residues: Doublecortin domain-containing protein 2 (475 aa).

2 consecutive Doublecortin domains span residues 17-100 and 139-221; these read KSVL…LNYL and CTIF…LPYS. The segment at 234 to 475 is disordered; sequence YGQKASSLPP…ESNKASSAVA (242 aa). Polar residues predominate over residues 252–272; that stretch reads GSGNYRQSKSTIGSSDNSSPQ. Residue Ser-270 is modified to Phosphoserine. Over residues 353 to 365 the composition is skewed to basic and acidic residues; the sequence is EKTSKDANQKDDF. The segment covering 407 to 419 has biased composition (acidic residues); the sequence is TDEENGEELDQVT. A compositionally biased stretch (polar residues) spans 455–475; it reads TVTSPQENEGNESNKASSAVA.

Interacts with DVL1, DVL2 and DVL3. As to expression, expressed in hair cells of the inner ear.

It localises to the cell projection. It is found in the cilium. Its subcellular location is the cytoplasm. The protein resides in the cytoskeleton. The protein localises to the cilium axoneme. It localises to the kinocilium. Protein that plays a role in the inhibition of canonical Wnt signaling pathway. May be involved in neuronal migration during development of the cerebral neocortex. Involved in the control of ciliogenesis and ciliary length. This chain is Doublecortin domain-containing protein 2 (Dcdc2), found in Rattus norvegicus (Rat).